The primary structure comprises 398 residues: Keratinocyte differentiation factor 1 (398 aa).

2 disordered regions span residues 1 to 60 and 123 to 156; these read MPRP…SITF and AEAN…STMG. Positions 44–55 are enriched in basic and acidic residues; it reads RPDPKDPGHHGP. Residue Ser218 is modified to Phosphoserine. 2 disordered regions span residues 307–340 and 369–392; these read RKSR…TMVG and GAPG…SGAP. Residues 377–389 show a composition bias toward polar residues; sequence HDSSFQGTDTDSS.

It localises to the cytoplasm. Its subcellular location is the cell junction. In terms of biological role, plays a role in the regulation of the epidermis formation during early development. Required both as an inhibitor of basal cell proliferation and a promoter of differentiation of basal progenitor cell progeny. This chain is Keratinocyte differentiation factor 1 (KDF1), found in Homo sapiens (Human).